Here is a 330-residue protein sequence, read N- to C-terminus: Beta-ketoacyl-[acyl-carrier-protein] synthase III (330 aa).

Catalysis depends on residues cysteine 115 and histidine 255. An ACP-binding region spans residues glutamine 256 to arginine 260. Asparagine 285 is a catalytic residue.

This sequence belongs to the thiolase-like superfamily. FabH family. As to quaternary structure, homodimer.

It localises to the cytoplasm. The enzyme catalyses malonyl-[ACP] + acetyl-CoA + H(+) = 3-oxobutanoyl-[ACP] + CO2 + CoA. It participates in lipid metabolism; fatty acid biosynthesis. Catalyzes the condensation reaction of fatty acid synthesis by the addition to an acyl acceptor of two carbons from malonyl-ACP. Catalyzes the first condensation reaction which initiates fatty acid synthesis and may therefore play a role in governing the total rate of fatty acid production. Possesses both acetoacetyl-ACP synthase and acetyl transacylase activities. Its substrate specificity determines the biosynthesis of branched-chain and/or straight-chain of fatty acids. The polypeptide is Beta-ketoacyl-[acyl-carrier-protein] synthase III (Helicobacter pylori (strain HPAG1)).